The primary structure comprises 146 residues: D-aminoacyl-tRNA deacylase (146 aa).

Positions 138 to 139 (GP) match the Gly-cisPro motif, important for rejection of L-amino acids motif.

It belongs to the DTD family. As to quaternary structure, homodimer.

Its subcellular location is the cytoplasm. The enzyme catalyses glycyl-tRNA(Ala) + H2O = tRNA(Ala) + glycine + H(+). It carries out the reaction a D-aminoacyl-tRNA + H2O = a tRNA + a D-alpha-amino acid + H(+). Functionally, an aminoacyl-tRNA editing enzyme that deacylates mischarged D-aminoacyl-tRNAs. Also deacylates mischarged glycyl-tRNA(Ala), protecting cells against glycine mischarging by AlaRS. Acts via tRNA-based rather than protein-based catalysis; rejects L-amino acids rather than detecting D-amino acids in the active site. By recycling D-aminoacyl-tRNA to D-amino acids and free tRNA molecules, this enzyme counteracts the toxicity associated with the formation of D-aminoacyl-tRNA entities in vivo and helps enforce protein L-homochirality. This chain is D-aminoacyl-tRNA deacylase, found in Xanthomonas axonopodis pv. citri (strain 306).